We begin with the raw amino-acid sequence, 217 residues long: NADH-quinone oxidoreductase subunit I (217 aa).

The interval 22 to 41 (TTEQYPEEKKETAPRFHGRH) is disordered. 2 consecutive 4Fe-4S ferredoxin-type domains span residues 43–73 (LNRH…VEGA) and 89–118 (RVYQ…MSND). [4Fe-4S] cluster-binding residues include C53, C56, C59, C63, C98, C101, C104, and C108. A disordered region spans residues 193-217 (ARRTAGEHSRADEVPAHGAGSERPR).

It belongs to the complex I 23 kDa subunit family. As to quaternary structure, NDH-1 is composed of 14 different subunits. Subunits NuoA, H, J, K, L, M, N constitute the membrane sector of the complex. The cofactor is [4Fe-4S] cluster.

It is found in the cell membrane. The catalysed reaction is a quinone + NADH + 5 H(+)(in) = a quinol + NAD(+) + 4 H(+)(out). In terms of biological role, NDH-1 shuttles electrons from NADH, via FMN and iron-sulfur (Fe-S) centers, to quinones in the respiratory chain. The immediate electron acceptor for the enzyme in this species is believed to be ubiquinone. Couples the redox reaction to proton translocation (for every two electrons transferred, four hydrogen ions are translocated across the cytoplasmic membrane), and thus conserves the redox energy in a proton gradient. This chain is NADH-quinone oxidoreductase subunit I, found in Frankia casuarinae (strain DSM 45818 / CECT 9043 / HFP020203 / CcI3).